A 163-amino-acid chain; its full sequence is 6,7-dimethyl-8-ribityllumazine synthase 1 (163 aa).

5-amino-6-(D-ribitylamino)uracil contacts are provided by residues Phe-27, 58–60 (ALE), and 87–89 (CVV). 92-93 (ET) is a (2S)-2-hydroxy-3-oxobutyl phosphate binding site. The active-site Proton donor is the His-95. Position 120 (Asn-120) interacts with 5-amino-6-(D-ribitylamino)uracil. Arg-134 provides a ligand contact to (2S)-2-hydroxy-3-oxobutyl phosphate.

The protein belongs to the DMRL synthase family.

The catalysed reaction is (2S)-2-hydroxy-3-oxobutyl phosphate + 5-amino-6-(D-ribitylamino)uracil = 6,7-dimethyl-8-(1-D-ribityl)lumazine + phosphate + 2 H2O + H(+). It participates in cofactor biosynthesis; riboflavin biosynthesis; riboflavin from 2-hydroxy-3-oxobutyl phosphate and 5-amino-6-(D-ribitylamino)uracil: step 1/2. In terms of biological role, catalyzes the formation of 6,7-dimethyl-8-ribityllumazine by condensation of 5-amino-6-(D-ribitylamino)uracil with 3,4-dihydroxy-2-butanone 4-phosphate. This is the penultimate step in the biosynthesis of riboflavin. This chain is 6,7-dimethyl-8-ribityllumazine synthase 1, found in Rhodopseudomonas palustris (strain ATCC BAA-98 / CGA009).